The following is a 187-amino-acid chain: UPF0301 protein YPO0936/y3322/YP_3506 (187 aa).

This sequence belongs to the UPF0301 (AlgH) family.

The sequence is that of UPF0301 protein YPO0936/y3322/YP_3506 from Yersinia pestis.